A 660-amino-acid polypeptide reads, in one-letter code: 1-deoxy-D-xylulose-5-phosphate synthase (660 aa).

Residues His86 and 127–129 (AHS) each bind thiamine diphosphate. Asp164 lines the Mg(2+) pocket. Thiamine diphosphate contacts are provided by residues 165-166 (GS), Asn196, Tyr306, and Glu388. Asn196 serves as a coordination point for Mg(2+).

This sequence belongs to the transketolase family. DXPS subfamily. Homodimer. The cofactor is Mg(2+). Thiamine diphosphate is required as a cofactor.

It catalyses the reaction D-glyceraldehyde 3-phosphate + pyruvate + H(+) = 1-deoxy-D-xylulose 5-phosphate + CO2. Its pathway is metabolic intermediate biosynthesis; 1-deoxy-D-xylulose 5-phosphate biosynthesis; 1-deoxy-D-xylulose 5-phosphate from D-glyceraldehyde 3-phosphate and pyruvate: step 1/1. Its function is as follows. Catalyzes the acyloin condensation reaction between C atoms 2 and 3 of pyruvate and glyceraldehyde 3-phosphate to yield 1-deoxy-D-xylulose-5-phosphate (DXP). The protein is 1-deoxy-D-xylulose-5-phosphate synthase of Gluconobacter oxydans (strain 621H) (Gluconobacter suboxydans).